Consider the following 330-residue polypeptide: Beta-hexosaminidase (330 aa).

Substrate contacts are provided by residues aspartate 62, arginine 70, arginine 130, and 160–161 (KH). Histidine 173 functions as the Proton donor/acceptor in the catalytic mechanism. Catalysis depends on aspartate 242, which acts as the Nucleophile.

This sequence belongs to the glycosyl hydrolase 3 family. NagZ subfamily. In terms of assembly, monomer.

It is found in the cytoplasm. It catalyses the reaction Hydrolysis of terminal non-reducing N-acetyl-D-hexosamine residues in N-acetyl-beta-D-hexosaminides.. It functions in the pathway cell wall biogenesis; peptidoglycan recycling. Functionally, plays a role in peptidoglycan recycling by cleaving the terminal beta-1,4-linked N-acetylglucosamine (GlcNAc) from peptide-linked peptidoglycan fragments, giving rise to free GlcNAc, anhydro-N-acetylmuramic acid and anhydro-N-acetylmuramic acid-linked peptides. Plays a role in beta-lactam antibiotic resistance via its role in generating anhydro-N-acetylmuramic acid-linked peptides; these peptides function as signaling molecules that induce high-level expression of the beta-lactamase AmpC. The sequence is that of Beta-hexosaminidase from Vibrio cholerae serotype O1 (strain ATCC 39315 / El Tor Inaba N16961).